The chain runs to 568 residues: Clathrin coat assembly protein AP180B (568 aa).

One can recognise an ENTH domain in the interval 1–127; sequence MSSLYTKLVK…EEYGRLGMDH (127 aa). The segment covering 262-283 has biased composition (basic and acidic residues); it reads HLREETKRQRGEPSEPQQDRKP. Residues 262 to 302 are disordered; it reads HLREETKRQRGEPSEPQQDRKPSTAISSTSSHNNNSNDKNK. Lysine 282 participates in a covalent cross-link: Glycyl lysine isopeptide (Lys-Gly) (interchain with G-Cter in ubiquitin). Over residues 284-298 the composition is skewed to low complexity; it reads STAISSTSSHNNNSN. Position 449 is a phosphothreonine (threonine 449).

It belongs to the AP180 family. In terms of assembly, interacts with PAN1 and the clathrin heavy and light chains CHC1 and CLC1.

Its subcellular location is the bud. The protein resides in the bud neck. It localises to the cell membrane. It is found in the cytoplasm. Its function is as follows. Involved in endocytosis and clathrin cage assembly. The sequence is that of Clathrin coat assembly protein AP180B (YAP1802) from Saccharomyces cerevisiae (strain ATCC 204508 / S288c) (Baker's yeast).